The primary structure comprises 206 residues: uncharacterized protein (206 aa).

The Nudix hydrolase domain maps to 29 to 169 (YWHSTFHCWV…DGVFAEGFIV (141 aa)). Residues 69-90 (AGHIKSGESIEDGVRELKEELG) carry the Nudix box motif. Positions 84 and 88 each coordinate Mg(2+).

It belongs to the Nudix hydrolase family. The cofactor is Mg(2+).

This is an uncharacterized protein from Clostridium acetobutylicum (strain ATCC 824 / DSM 792 / JCM 1419 / IAM 19013 / LMG 5710 / NBRC 13948 / NRRL B-527 / VKM B-1787 / 2291 / W).